The sequence spans 160 residues: 3-dehydroquinate dehydratase (160 aa).

The active-site Proton acceptor is the tyrosine 22. The substrate site is built by asparagine 73, histidine 79, and aspartate 86. Catalysis depends on histidine 99, which acts as the Proton donor. Substrate contacts are provided by residues 100 to 101 (IS) and arginine 110.

This sequence belongs to the type-II 3-dehydroquinase family. In terms of assembly, homododecamer.

It carries out the reaction 3-dehydroquinate = 3-dehydroshikimate + H2O. It functions in the pathway metabolic intermediate biosynthesis; chorismate biosynthesis; chorismate from D-erythrose 4-phosphate and phosphoenolpyruvate: step 3/7. Catalyzes a trans-dehydration via an enolate intermediate. The chain is 3-dehydroquinate dehydratase from Sulfurimonas denitrificans (strain ATCC 33889 / DSM 1251) (Thiomicrospira denitrificans (strain ATCC 33889 / DSM 1251)).